Reading from the N-terminus, the 278-residue chain is Indole-3-glycerol phosphate synthase (278 aa).

The protein belongs to the TrpC family.

The catalysed reaction is 1-(2-carboxyphenylamino)-1-deoxy-D-ribulose 5-phosphate + H(+) = (1S,2R)-1-C-(indol-3-yl)glycerol 3-phosphate + CO2 + H2O. It participates in amino-acid biosynthesis; L-tryptophan biosynthesis; L-tryptophan from chorismate: step 4/5. This is Indole-3-glycerol phosphate synthase from Pseudomonas aeruginosa (strain UCBPP-PA14).